The following is a 473-amino-acid chain: MKTGRISQIMGPVVDVRFEDGHLPEIYNAIRVSHKAESESEVDIDLTLEVALHLGDDTVRTIAMASTDGVKRGMEAVDLGKPISVPVGNVTLGRVFNVLGDNIDLDEPLGVEAQRDPIHRQAPSFDQLSTEVEILETGIKVVDLLAPYIKGGKIGLFGGAGVGKTVLIQELINNIAQEHGGISVFAGVGERTREGNDLYYEMKDSGVIEKTAMVFGQMNEPPGARMRVALTGLTMAEHFRDELGQDVLFFIDNIYRFTQAGSEVSALLGRMPSAVGYQPTLATEMGQLQERITSTNVGSVTSIQAIYVPADDYTDPAPATTFAHLDATTNLERKLTEMGIYPAVDPLASTSRALAPEIVGEEHYAIAREVQQTLQRYKELQDIIAILGMDELSEDDKLVVHRARRVQFFLSQNFHVAEQFTGQKGSYVPLKETVKGFKEILSGKYDHLPEDAFRLVGRIEEVVEKAKEMGVEA.

Residue 158 to 165 (GGAGVGKT) participates in ATP binding.

The protein belongs to the ATPase alpha/beta chains family. In terms of assembly, F-type ATPases have 2 components, CF(1) - the catalytic core - and CF(0) - the membrane proton channel. CF(1) has five subunits: alpha(3), beta(3), gamma(1), delta(1), epsilon(1). CF(0) has three main subunits: a(1), b(2) and c(9-12). The alpha and beta chains form an alternating ring which encloses part of the gamma chain. CF(1) is attached to CF(0) by a central stalk formed by the gamma and epsilon chains, while a peripheral stalk is formed by the delta and b chains.

The protein resides in the cell membrane. The catalysed reaction is ATP + H2O + 4 H(+)(in) = ADP + phosphate + 5 H(+)(out). Its function is as follows. Produces ATP from ADP in the presence of a proton gradient across the membrane. The catalytic sites are hosted primarily by the beta subunits. This is ATP synthase subunit beta from Bacillus pumilus (strain SAFR-032).